Here is an 87-residue protein sequence, read N- to C-terminus: UPF0250 protein BCc_307 (87 aa).

The protein belongs to the UPF0250 family.

This Buchnera aphidicola subsp. Cinara cedri (strain Cc) protein is UPF0250 protein BCc_307.